The chain runs to 143 residues: Transcriptional regulator MraZ (143 aa).

SpoVT-AbrB domains follow at residues 5-47 (TYTP…PRSE) and 76-119 (TDEQ…DAQA).

Belongs to the MraZ family. Forms oligomers.

It localises to the cytoplasm. Its subcellular location is the nucleoid. This Mycobacterium ulcerans (strain Agy99) protein is Transcriptional regulator MraZ.